Reading from the N-terminus, the 147-residue chain is UPF0178 protein VS_2364 (147 aa).

The protein belongs to the UPF0178 family.

The polypeptide is UPF0178 protein VS_2364 (Vibrio atlanticus (strain LGP32) (Vibrio splendidus (strain Mel32))).